A 68-amino-acid polypeptide reads, in one-letter code: MQVSVRDNNVEQALRALKKKLQREGVFREMKLKQHFEKPSVKKAREKAEAVRRARKLARKKAQREGAL.

It belongs to the bacterial ribosomal protein bS21 family.

The sequence is that of Small ribosomal subunit protein bS21 from Paracoccus denitrificans (strain Pd 1222).